The primary structure comprises 130 residues: Small ribosomal subunit protein uS9 (130 aa).

This sequence belongs to the universal ribosomal protein uS9 family.

The chain is Small ribosomal subunit protein uS9 from Clostridium perfringens (strain ATCC 13124 / DSM 756 / JCM 1290 / NCIMB 6125 / NCTC 8237 / Type A).